A 576-amino-acid polypeptide reads, in one-letter code: Probable vesicular glutamate transporter eat-4 (576 aa).

Over M1 to R69 the chain is Cytoplasmic. The disordered stretch occupies residues A25–P46. The span at Q36 to P46 shows a compositional bias: polar residues. A helical transmembrane segment spans residues W70 to F90. The Extracellular portion of the chain corresponds to G91–S121. N-linked (GlcNAc...) asparagine glycans are attached at residues N100 and N114. A helical membrane pass occupies residues V122–A142. Topologically, residues A143–L150 are cytoplasmic. A helical transmembrane segment spans residues F151–V171. Residues K172–D174 lie on the Extracellular side of the membrane. The chain crosses the membrane as a helical span at residues Y175 to M195. Topologically, residues H196 to T213 are cytoplasmic. A helical transmembrane segment spans residues T214–V234. Topologically, residues S235–W239 are extracellular. A helical transmembrane segment spans residues A240–V260. Over T261–K305 the chain is Cytoplasmic. The helical transmembrane segment at P306–L325 threads the bilayer. Topologically, residues Q326 to G344 are extracellular. A helical transmembrane segment spans residues L345–A365. Residues D366 to K381 are Cytoplasmic-facing. A helical membrane pass occupies residues I382–T402. At S403–T406 the chain is on the extracellular side. The chain crosses the membrane as a helical span at residues A407–V427. Residues N428 to A437 are Cytoplasmic-facing. A helical membrane pass occupies residues A438–V458. The Extracellular portion of the chain corresponds to T459–T471. The helical transmembrane segment at S472 to A492 threads the bilayer. Over S493 to W576 the chain is Cytoplasmic.

It belongs to the major facilitator superfamily. Sodium/anion cotransporter family. VGLUT subfamily. As to expression, expressed in neurons of the pharynx and the extrapharyngeal nervous system. Highly expressed in male PHC sensory neurons.

The protein localises to the cell membrane. The protein resides in the synapse. Required for glutamatergic synaptic transmission. In AWB and AWC sensory neurons, required for the detection of preferred food sources, probably via glutamatergic neurotransmission from sensory neurons. Negatively regulates the turning step of male mating behavior. This chain is Probable vesicular glutamate transporter eat-4, found in Caenorhabditis elegans.